We begin with the raw amino-acid sequence, 696 residues long: SLIT and NTRK-like protein 1 (696 aa).

An N-terminal signal peptide occupies residues 1-17 (MLLWILLLETSLCFAAG). The LRRNT 1 domain maps to 18–57 (NVTGDVCKEKICSCNEIEGDLHVDCEKKGFTSLQRFTAPT). Over 18–622 (NVTGDVCKEK…SRVSISVLVP (605 aa)) the chain is Extracellular. LRR repeat units follow at residues 59–80 (QFYH…EFAN), 83–104 (NAVS…AFLG), 106–128 (QLVK…TFLG), 131–152 (DLEY…AFQD), 155–176 (KLEV…VFQY), and 178–199 (PITH…EVLE). Residues 212 to 263 (NPWDCTCDLLSLKEWLENIPKNALIGRVVCEAPTRLQGKDLNETTEQDLCPL) form the LRRCT 1 domain. The disordered stretch occupies residues 265 to 314 (NRVDSSLPAPPAQEETFAPGPLPTPFKTNGQEDHATPGSAPNGGTKIPGN). The LRRNT 2 domain maps to 332–373 (NKPLANSLPCPGGCSCDHIPGSGLKMNCNNRNVSSLADLKPK). LRR repeat units follow at residues 376 to 397 (NVQE…HFVD), 400 to 421 (NLIL…TFKN), 424 to 445 (DLRW…KFAG), 448 to 469 (NLEY…TFNA), 472 to 493 (KLRI…VFAG), and 495 to 516 (SLSK…GVLD). Residues 529–580 (NPWECSCTIVPFKQWAERLGSEVLMSDLKCETPVNFFRKDFMLLSNDEICPQ) form the LRRCT 2 domain. A helical transmembrane segment spans residues 623–643 (GLLLVFVTSAFTVVGMLVFIL). At 644–696 (RNRKRSKRRDANSSASEINSLQTVCDSSYWHNGPYNADGAHRVYDCGSHSLSD) the chain is on the cytoplasmic side. S695 is modified (phosphoserine; by CK2).

This sequence belongs to the SLITRK family. Can form homodimers; homodimerization requires repeat LRR 2. Interacts with YWHAB, YWHAE, YWHAG, YWHAH, SFN, YWHAQ and YWHAZ. In terms of processing, undergoes proteolytic cleavage that results in shedding of the ectodomain and cleavage of the C-terminal cytoplasmic tail. Glycosylated. Phosphorylation at Ser-695 is necessary for proper function in promoting neurite outgrowth. Expressed predominantly in the frontal lobe of the cerebral cortex of the brain. Also expressed in some astrocytic brain tumors such as astrocytomas, oligodendrogliomas, glioblastomas, gangliogliomas and primitive neuroectodermal tumors.

The protein localises to the membrane. The protein resides in the secreted. Its subcellular location is the synapse. In terms of biological role, it is involved in synaptogenesis and promotes excitatory synapse differentiation. Enhances neuronal dendrite outgrowth. This is SLIT and NTRK-like protein 1 (SLITRK1) from Homo sapiens (Human).